The primary structure comprises 385 residues: Spermidine/putrescine import ATP-binding protein PotA (385 aa).

The region spanning 6–238 (IEFKNVSKVF…PINHFVATFI (233 aa)) is the ABC transporter domain. 40–47 (GASGSGKS) contributes to the ATP binding site.

The protein belongs to the ABC transporter superfamily. Spermidine/putrescine importer (TC 3.A.1.11.1) family. The complex is composed of two ATP-binding proteins (PotA), two transmembrane proteins (PotB and PotC) and a solute-binding protein (PotD).

The protein resides in the cell membrane. It carries out the reaction ATP + H2O + polyamine-[polyamine-binding protein]Side 1 = ADP + phosphate + polyamineSide 2 + [polyamine-binding protein]Side 1.. Its function is as follows. Part of the ABC transporter complex PotABCD involved in spermidine/putrescine import. Responsible for energy coupling to the transport system. This Streptococcus pneumoniae serotype 4 (strain ATCC BAA-334 / TIGR4) protein is Spermidine/putrescine import ATP-binding protein PotA.